Here is a 421-residue protein sequence, read N- to C-terminus: Subtilisin-like protease 2 (421 aa).

Positions 1–16 are cleaved as a signal peptide; it reads MQLLNFGLLLLPFVAG. Positions 17-122 are excised as a propeptide; it reads DLAPQPEPLL…VHPDQHFYLA (106 aa). The 86-residue stretch at 36-121 folds into the Inhibitor I9 domain; sequence QYLVTLKEGL…SVHPDQHFYL (86 aa). One can recognise a Peptidase S8 domain in the interval 131-421; that stretch reads RWGLGYMSSK…ERKCKLPKYY (291 aa). The active-site Charge relay system is Asp169. A glycan (N-linked (GlcNAc...) asparagine) is linked at Asn192. Residue His201 is the Charge relay system of the active site. 3 N-linked (GlcNAc...) asparagine glycosylation sites follow: Asn248, Asn261, and Asn348. Residue Ser357 is the Charge relay system of the active site. N-linked (GlcNAc...) asparagine glycosylation is present at Asn388.

It belongs to the peptidase S8 family.

The protein localises to the secreted. In terms of biological role, secreted subtilisin-like serine protease with keratinolytic activity that contributes to pathogenicity. This is Subtilisin-like protease 2 (SUB2) from Trichophyton rubrum (Athlete's foot fungus).